Here is a 341-residue protein sequence, read N- to C-terminus: 5-formaminoimidazole-4-carboxamide-1-(beta)-D-ribofuranosyl 5'-monophosphate synthetase (341 aa).

5-amino-1-(5-phospho-beta-D-ribosyl)imidazole-4-carboxamide contacts are provided by histidine 10 and threonine 77. One can recognise an ATP-grasp domain in the interval 106–317 (DRSLKERLMR…YYGLLFDEPI (212 aa)). ATP-binding positions include 132 to 188 (DTLV…VLAY) and glutamate 210. Residue asparagine 238 participates in 5-amino-1-(5-phospho-beta-D-ribosyl)imidazole-4-carboxamide binding. The Mg(2+) site is built by glutamate 277 and glutamate 290.

It belongs to the phosphohexose mutase family. Mg(2+) serves as cofactor. It depends on Mn(2+) as a cofactor.

It carries out the reaction 5-amino-1-(5-phospho-beta-D-ribosyl)imidazole-4-carboxamide + formate + ATP = 5-formamido-1-(5-phospho-D-ribosyl)imidazole-4-carboxamide + ADP + phosphate. The protein operates within purine metabolism; IMP biosynthesis via de novo pathway; 5-formamido-1-(5-phospho-D-ribosyl)imidazole-4-carboxamide from 5-amino-1-(5-phospho-D-ribosyl)imidazole-4-carboxamide (formate route): step 1/1. In terms of biological role, catalyzes the ATP- and formate-dependent formylation of 5-aminoimidazole-4-carboxamide-1-beta-d-ribofuranosyl 5'-monophosphate (AICAR) to 5-formaminoimidazole-4-carboxamide-1-beta-d-ribofuranosyl 5'-monophosphate (FAICAR) in the absence of folates. This chain is 5-formaminoimidazole-4-carboxamide-1-(beta)-D-ribofuranosyl 5'-monophosphate synthetase, found in Cenarchaeum symbiosum (strain A).